A 149-amino-acid chain; its full sequence is UPF0310 protein msl3206 (149 aa).

The protein belongs to the UPF0310 family.

This chain is UPF0310 protein msl3206, found in Mesorhizobium japonicum (strain LMG 29417 / CECT 9101 / MAFF 303099) (Mesorhizobium loti (strain MAFF 303099)).